Consider the following 357-residue polypeptide: Tetraacyldisaccharide 4'-kinase (357 aa).

ATP is bound at residue 54-61 (TVGGAGKT).

It belongs to the LpxK family.

The enzyme catalyses a lipid A disaccharide + ATP = a lipid IVA + ADP + H(+). Its pathway is glycolipid biosynthesis; lipid IV(A) biosynthesis; lipid IV(A) from (3R)-3-hydroxytetradecanoyl-[acyl-carrier-protein] and UDP-N-acetyl-alpha-D-glucosamine: step 6/6. In terms of biological role, transfers the gamma-phosphate of ATP to the 4'-position of a tetraacyldisaccharide 1-phosphate intermediate (termed DS-1-P) to form tetraacyldisaccharide 1,4'-bis-phosphate (lipid IVA). This chain is Tetraacyldisaccharide 4'-kinase, found in Rhizobium leguminosarum bv. trifolii (strain WSM2304).